The sequence spans 102 residues: Urease subunit beta (102 aa).

The protein belongs to the urease beta subunit family. In terms of assembly, heterotrimer of UreA (gamma), UreB (beta) and UreC (alpha) subunits. Three heterotrimers associate to form the active enzyme.

It is found in the cytoplasm. It catalyses the reaction urea + 2 H2O + H(+) = hydrogencarbonate + 2 NH4(+). It functions in the pathway nitrogen metabolism; urea degradation; CO(2) and NH(3) from urea (urease route): step 1/1. This Acinetobacter baylyi (strain ATCC 33305 / BD413 / ADP1) protein is Urease subunit beta.